We begin with the raw amino-acid sequence, 346 residues long: uncharacterized protein (346 aa).

The helical transmembrane segment at 16 to 36 (ILGIIICIILIVGFFISFDST) threads the bilayer.

It is found in the membrane. This is an uncharacterized protein from Methanocaldococcus jannaschii (strain ATCC 43067 / DSM 2661 / JAL-1 / JCM 10045 / NBRC 100440) (Methanococcus jannaschii).